A 267-amino-acid chain; its full sequence is L-erythrulose-1-phosphate isomerase (267 aa).

H95 (electrophile) is an active-site residue. E168 functions as the Proton acceptor in the catalytic mechanism. The substrate site is built by G174 and S211.

Belongs to the triosephosphate isomerase family. In terms of assembly, homodimer.

It is found in the cytoplasm. It catalyses the reaction L-erythrulose 1-phosphate = D-erythrulose 4-phosphate. It functions in the pathway carbohydrate metabolism; erythritol degradation. Catalyzes the isomerization of D-erythrulose-4P to L-erythrulose-1P. The protein is L-erythrulose-1-phosphate isomerase of Rhizobium etli (strain ATCC 51251 / DSM 11541 / JCM 21823 / NBRC 15573 / CFN 42).